We begin with the raw amino-acid sequence, 88 residues long: Probable Fe(2+)-trafficking protein (88 aa).

Belongs to the Fe(2+)-trafficking protein family.

Could be a mediator in iron transactions between iron acquisition and iron-requiring processes, such as synthesis and/or repair of Fe-S clusters in biosynthetic enzymes. The protein is Probable Fe(2+)-trafficking protein of Teredinibacter turnerae (strain ATCC 39867 / T7901).